A 1079-amino-acid polypeptide reads, in one-letter code: Eukaryotic translation initiation factor 5B (1079 aa).

Residues 1 to 478 (MGKKGKKSGY…QAAPAESNVS (478 aa)) form a disordered region. Polar residues predominate over residues 22 to 38 (SGQNEYLDNTSQDSPQN). The span at 57–67 (SKKKKGKKNKG) shows a compositional bias: basic residues. 3 positions are modified to phosphoserine: Ser-73, Ser-77, and Ser-82. Positions 105-114 (KKGKKGKKSK) are enriched in basic residues. A Phosphoserine modification is found at Ser-127. Positions 160-169 (NNNESEAAAP) are enriched in low complexity. The segment covering 173–192 (PEVRVKTKKEKEREKKEREK) has biased composition (basic and acidic residues). The span at 193 to 204 (LRKKQQQAKKKG) shows a compositional bias: basic residues. The span at 207–233 (GEDTLASSEVSSEVDISTPAENDSSAK) shows a compositional bias: polar residues. The span at 253 to 293 (MLEEKRAREEEEQRIREEEARIAEEEKRLAEVEEARKEEAR) shows a compositional bias: basic and acidic residues. 2 stretches are compositionally biased toward low complexity: residues 321–334 (QQAL…QMLE) and 361–376 (RSGT…LESS). Thr-364 carries the post-translational modification Phosphothreonine. Positions 385–408 (EPQKDSKDDSEKVEKETEVERKEE) are enriched in basic and acidic residues. Over residues 409–431 (NEAEAEAVFDDWEAALEEPEVAE) the composition is skewed to acidic residues. The segment covering 436–466 (VTEKKETDIKSDAVEHSIKDKEDSKTDKVDD) has biased composition (basic and acidic residues). A tr-type G domain is found at 482-700 (LRSPICCILG…LISLTQTRMS (219 aa)). The segment at 491–498 (GHVDTGKT) is G1. 491-498 (GHVDTGKT) provides a ligand contact to GTP. Positions 516–520 (GITQQ) are G2. The segment at 555–558 (DTPG) is G3. The segment at 609 to 612 (NKVD) is G4. Residues 677–679 (SAQ) are G5.

It belongs to the TRAFAC class translation factor GTPase superfamily. Classic translation factor GTPase family. IF-2 subfamily. A monovalent cation is required as a cofactor.

The protein resides in the cytoplasm. The catalysed reaction is GTP + H2O = GDP + phosphate + H(+). Its function is as follows. Plays a role in translation initiation. Translational GTPase that catalyzes the joining of the 40S and 60S subunits to form the 80S initiation complex with the initiator methionine-tRNA in the P-site base paired to the start codon. GTP binding and hydrolysis induces conformational changes in the enzyme that renders it active for productive interactions with the ribosome. The release of the enzyme after formation of the initiation complex is a prerequisite to form elongation-competent ribosomes. The chain is Eukaryotic translation initiation factor 5B from Schizosaccharomyces pombe (strain 972 / ATCC 24843) (Fission yeast).